A 100-amino-acid chain; its full sequence is Large ribosomal subunit protein uL23 (100 aa).

The protein belongs to the universal ribosomal protein uL23 family. As to quaternary structure, part of the 50S ribosomal subunit. Contacts protein L29, and trigger factor when it is bound to the ribosome.

In terms of biological role, one of the early assembly proteins it binds 23S rRNA. One of the proteins that surrounds the polypeptide exit tunnel on the outside of the ribosome. Forms the main docking site for trigger factor binding to the ribosome. This is Large ribosomal subunit protein uL23 from Pasteurella multocida (strain Pm70).